The chain runs to 469 residues: Aryl-phospho-beta-D-glucosidase BglH (469 aa).

Glutamate 175 acts as the Proton donor in catalysis. Residue glutamate 368 is the Nucleophile of the active site.

This sequence belongs to the glycosyl hydrolase 1 family.

It catalyses the reaction 6-phospho-beta-D-glucosyl-(1-&gt;4)-D-glucose + H2O = D-glucose 6-phosphate + D-glucose. In terms of biological role, catalyzes the hydrolysis of aryl-phospho-beta-D-glucosides such as 4-methylumbelliferyl-phospho-beta-D-glucopyranoside (MUG-P), phosphoarbutin and phosphosalicin. Plays a major role in the utilization of arbutin or salicin as the sole carbon source. BglA and BglH are the major proteins contributing to hydrolysis of MUG-P by extracts of late-exponential-phase or stationary-phase B.subtilis cells. The protein is Aryl-phospho-beta-D-glucosidase BglH (bglH) of Bacillus subtilis (strain 168).